A 1117-amino-acid polypeptide reads, in one-letter code: Protein ECM21 (1117 aa).

2 disordered regions span residues 1–48 (MPFI…RRSS) and 63–155 (VHSP…YSQI). Residues 11–34 (KNSSHSLSETDLNQSKGQPFQPSP) are compositionally biased toward polar residues. At S18 the chain carries Phosphoserine. The segment covering 70–81 (NNTTKGGNNNGN) has biased composition (low complexity). S115 bears the Phosphoserine mark. Low complexity predominate over residues 117 to 130 (SDSATTTPRSSTSD). Residue S140 is modified to Phosphoserine. Residue K191 forms a Glycyl lysine isopeptide (Lys-Gly) (interchain with G-Cter in ubiquitin) linkage. Disordered regions lie at residues 275–312 (ATTA…ELNT) and 486–523 (YRQD…AQAH). S286 bears the Phosphoserine mark. Residues 501–519 (SSSSLSSTTSSLKLTETES) show a composition bias toward low complexity. 2 positions are modified to phosphoserine: S527 and S550. Residues K577, K651, and K712 each participate in a glycyl lysine isopeptide (Lys-Gly) (interchain with G-Cter in ubiquitin) cross-link. At S775 the chain carries Phosphoserine. Glycyl lysine isopeptide (Lys-Gly) (interchain with G-Cter in ubiquitin) cross-links involve residues K794, K807, and K1024. Disordered regions lie at residues 1016-1065 (RSRF…KDKQ) and 1079-1117 (KDDE…SDEE). Polar residues predominate over residues 1027 to 1059 (STPSPVNRSHNSSPTNGLSQANGTVRIPNATTE). S1035 bears the Phosphoserine mark. Positions 1089-1098 (SSSSADSLLS) are enriched in low complexity.

Belongs to the CSR2 family.

It localises to the cytoplasm. Its function is as follows. May be involved in cell wall organization and biogenesis. The protein is Protein ECM21 (ECM21) of Saccharomyces cerevisiae (strain ATCC 204508 / S288c) (Baker's yeast).